A 153-amino-acid polypeptide reads, in one-letter code: Small ribosomal subunit protein bS6 (153 aa).

The segment at 97-153 (EEGPSAMMRKADRDRERDDRGGGFRGERDGGGFRGDRGDRGDRGPRRPRDEETADEE) is disordered. Basic and acidic residues predominate over residues 105-147 (RKADRDRERDDRGGGFRGERDGGGFRGDRGDRGDRGPRRPRDE).

It belongs to the bacterial ribosomal protein bS6 family.

Binds together with bS18 to 16S ribosomal RNA. This is Small ribosomal subunit protein bS6 from Bradyrhizobium sp. (strain BTAi1 / ATCC BAA-1182).